The chain runs to 1526 residues: Probable autotransporter YpjA (1526 aa).

A signal peptide spans 1–29 (MNRTSPYYCRRSVLSLLISALIYAPPGMA). The interval 1173–1223 (NSNWNLTNDVKPNPDPIPNPKPDPKPDPKPDPNPKPDPTPDPTPTPVPEKR) is disordered. Over residues 1194–1206 (PDPKPDPKPDPNP) the composition is skewed to basic and acidic residues. Positions 1207–1219 (KPDPTPDPTPTPV) are enriched in pro residues. One can recognise an Autotransporter domain in the interval 1258–1526 (ASPHNNNVWG…NAVAGVNWSF (269 aa)).

It localises to the cell outer membrane. Its function is as follows. Upon overexpression shows increased adherence to polyvinyl chloride (PVC) plates, increased mature biofilm formation. This chain is Probable autotransporter YpjA (ypjA), found in Escherichia coli (strain K12).